We begin with the raw amino-acid sequence, 405 residues long: S-adenosylmethionine synthase (405 aa).

139-144 (GQGSVD) lines the ATP pocket.

Belongs to the AdoMet synthase 2 family. Mg(2+) serves as cofactor.

It carries out the reaction L-methionine + ATP + H2O = S-adenosyl-L-methionine + phosphate + diphosphate. It functions in the pathway amino-acid biosynthesis; S-adenosyl-L-methionine biosynthesis; S-adenosyl-L-methionine from L-methionine: step 1/1. Catalyzes the formation of S-adenosylmethionine from methionine and ATP. The protein is S-adenosylmethionine synthase of Thermococcus onnurineus (strain NA1).